The primary structure comprises 319 residues: MLQNQDTMEILSNSTSKFPTFLLTGIPGLESAHVWISIPFCCFYAIALSGNSVILFVIITQQSLHEPMYYFLFRLSATDLGLTVSSLSTTLGILWFEAREISLYSCIVQMFFLHGFTFMESGVLVATAFDRYVAICDPLRYTTILTNSRIIQMGLLMITRAIVLILPLLLLLKPLYFCRMNALSHSYCYHPDVIQLACSDIRANSICGLIDLILTTGIDTPCIVLSYILIIHSVLRIASPEEWHKVFSTCVSHVGAVAFFYIHMLSLSLVYRYGRSAPRVVHSVMANVYLLLPPVLNPIIDSVKTKQIRKAMLSLLLTK.

Over 1-37 (MLQNQDTMEILSNSTSKFPTFLLTGIPGLESAHVWIS) the chain is Extracellular. The chain crosses the membrane as a helical span at residues 38-58 (IPFCCFYAIALSGNSVILFVI). The Cytoplasmic portion of the chain corresponds to 59 to 75 (ITQQSLHEPMYYFLFRL). The chain crosses the membrane as a helical span at residues 76–96 (SATDLGLTVSSLSTTLGILWF). Residues 97 to 106 (EAREISLYSC) are Extracellular-facing. Cys106 and Cys188 are joined by a disulfide. Residues 107 to 127 (IVQMFFLHGFTFMESGVLVAT) form a helical membrane-spanning segment. Over 128–149 (AFDRYVAICDPLRYTTILTNSR) the chain is Cytoplasmic. The helical transmembrane segment at 150–170 (IIQMGLLMITRAIVLILPLLL) threads the bilayer. Residues 171-211 (LLKPLYFCRMNALSHSYCYHPDVIQLACSDIRANSICGLID) lie on the Extracellular side of the membrane. Residues 212-232 (LILTTGIDTPCIVLSYILIIH) form a helical membrane-spanning segment. Residues 233-249 (SVLRIASPEEWHKVFST) are Cytoplasmic-facing. Residues 250–270 (CVSHVGAVAFFYIHMLSLSLV) form a helical membrane-spanning segment. Topologically, residues 271-279 (YRYGRSAPR) are extracellular. A helical transmembrane segment spans residues 280–300 (VVHSVMANVYLLLPPVLNPII). Over 301–319 (DSVKTKQIRKAMLSLLLTK) the chain is Cytoplasmic.

The protein belongs to the G-protein coupled receptor 1 family.

Its subcellular location is the cell membrane. Functionally, odorant receptor. In Homo sapiens (Human), this protein is Olfactory receptor 51F1 (OR51F1).